Reading from the N-terminus, the 137-residue chain is Putative mucosal pentraxin homolog (137 aa).

A Pentraxin (PTX) domain is found at 1–137 (MGMYLLHIGN…YVVTKPKVWA (137 aa)). 3 residues coordinate Ca(2+): Glu73, Asp75, and Gln85.

It belongs to the pentraxin family. Not expressed in the intestinal tract including ascending colon, descending colon and rectum. Not expressed in the human colon cancer cell lines HT-29 and CaCo-2.

This chain is Putative mucosal pentraxin homolog (MPTX1), found in Homo sapiens (Human).